We begin with the raw amino-acid sequence, 217 residues long: Probable GTP-binding protein EngB (217 aa).

Residues 33–217 (GPTEIAFAGR…RAAIELAVTR (185 aa)) form the EngB-type G domain. GTP-binding positions include 41 to 48 (GRSNVGKS), 68 to 72 (GRTQE), 95 to 98 (DMPG), 162 to 165 (TKTD), and 196 to 198 (TSS). 2 residues coordinate Mg(2+): Ser-48 and Thr-70.

Belongs to the TRAFAC class TrmE-Era-EngA-EngB-Septin-like GTPase superfamily. EngB GTPase family. Requires Mg(2+) as cofactor.

Its function is as follows. Necessary for normal cell division and for the maintenance of normal septation. In Rhizobium meliloti (strain 1021) (Ensifer meliloti), this protein is Probable GTP-binding protein EngB.